The chain runs to 279 residues: Protein phosphatase 1 regulatory subunit 3E (279 aa).

2 positions are modified to phosphoserine: Ser16 and Ser33. The tract at residues 28-89 (RSQRPSLEEE…RSPDTRKRVR (62 aa)) is disordered. Positions 51–65 (ARSRAHVPGRGRRAR) are enriched in basic residues. A Phosphoserine modification is found at Ser66. A PP1-binding motif motif is present at residues 87 to 90 (RVRF). Positions 154-259 (AARLQAQRIC…NNGGRDYALL (106 aa)) constitute a CBM21 domain. Positions 176–198 (GSARVLDLAYEKRVSVRWSADGW) are glycogen-binding motif. The interval 248–256 (WDNNGGRDY) is substrate-binding motif.

Expressed in liver and heart, with low levels in skeletal muscle.

Functionally, acts as a glycogen-targeting subunit for PP1. PP1 is involved in glycogen metabolism and contributes to the activation of glycogen synthase leading to an increase in glycogen synthesis. The polypeptide is Protein phosphatase 1 regulatory subunit 3E (Ppp1r3e) (Rattus norvegicus (Rat)).